Reading from the N-terminus, the 132-residue chain is Small ribosomal subunit protein uS8 (132 aa).

Belongs to the universal ribosomal protein uS8 family. In terms of assembly, part of the 30S ribosomal subunit. Contacts proteins S5 and S12.

Functionally, one of the primary rRNA binding proteins, it binds directly to 16S rRNA central domain where it helps coordinate assembly of the platform of the 30S subunit. This chain is Small ribosomal subunit protein uS8, found in Streptococcus pneumoniae (strain Taiwan19F-14).